The following is a 426-amino-acid chain: Endoglucanase Z (426 aa).

Positions 1-43 (MPLSYLDKNPVIDSKKHALRKKLFLSCAYFGLSLACLSSNAWA) are cleaved as a signal peptide. The catalytic stretch occupies residues 44–332 (SVEPLSVNGN…VKSIIQSWPY (289 aa)). Glu176 serves as the catalytic Proton donor. Glu263 acts as the Nucleophile in catalysis. The segment at 333–366 (KAGSAASATTDPSTDTTTDTTVDEPTTTDTPATA) is linker. The segment at 336–367 (SAASATTDPSTDTTTDTTVDEPTTTDTPATAD) is disordered. A cellulose-binding region spans residues 367-426 (DCANANVYPNWVSKDWAGGQPTHNEAGQSIVYKGNLYTANWYTASVPGSDSSWTQVGSCN). Cysteines 368 and 425 form a disulfide.

The protein belongs to the glycosyl hydrolase 5 (cellulase A) family.

It is found in the secreted. It catalyses the reaction Endohydrolysis of (1-&gt;4)-beta-D-glucosidic linkages in cellulose, lichenin and cereal beta-D-glucans.. In terms of biological role, represents 97% of the global cellulase activity. This is Endoglucanase Z (celZ) from Dickeya dadantii (strain 3937) (Erwinia chrysanthemi (strain 3937)).